Reading from the N-terminus, the 266-residue chain is Chymotrypsin-like elastase family member 1 (266 aa).

The first 16 residues, 1–16 (MLRFLVFATLVLYGHS), serve as a signal peptide directing secretion. A propeptide spans 17–26 (TQDFPETNAR) (activation peptide). A Peptidase S1 domain is found at 27 to 264 (VVGGTEAGRN…YISWINKTIA (238 aa)). Cys56 and Cys72 form a disulfide bridge. Catalysis depends on His71, which acts as the Charge relay system. The Ca(2+) site is built by Asp85, Asn87, Gln90, and Glu95. The N-linked (GlcNAc...) asparagine glycan is linked to Asn87. The active-site Charge relay system is Asp119. Disulfide bonds link Cys153–Cys220, Cys184–Cys200, and Cys210–Cys240. Ser214 functions as the Charge relay system in the catalytic mechanism. N-linked (GlcNAc...) asparagine glycosylation is found at Asn241 and Asn260.

The protein belongs to the peptidase S1 family. Elastase subfamily. The cofactor is Ca(2+).

It localises to the secreted. It catalyses the reaction Hydrolysis of proteins, including elastin. Preferential cleavage: Ala-|-Xaa.. Functionally, serine proteases that hydrolyze many proteins in addition to elastin. This Macaca fascicularis (Crab-eating macaque) protein is Chymotrypsin-like elastase family member 1 (CELA1).